The sequence spans 450 residues: Phosphoglucosamine mutase (450 aa).

Serine 101 functions as the Phosphoserine intermediate in the catalytic mechanism. The Mg(2+) site is built by serine 101, aspartate 240, aspartate 242, and aspartate 244. Serine 101 bears the Phosphoserine mark.

The protein belongs to the phosphohexose mutase family. Mg(2+) is required as a cofactor. Activated by phosphorylation.

The enzyme catalyses alpha-D-glucosamine 1-phosphate = D-glucosamine 6-phosphate. Its function is as follows. Catalyzes the conversion of glucosamine-6-phosphate to glucosamine-1-phosphate. This chain is Phosphoglucosamine mutase, found in Streptococcus thermophilus (strain ATCC BAA-250 / LMG 18311).